The chain runs to 332 residues: MELNISESRSRSIRCIVKLGGAAITCKNELEKIHDENLEVVACQLRQAMLEGSAPSKVIGMDWSKRPGSSEISCDVDDIGDQKSSEFSKFVVVHGAGSFGHFQASRSGVHKGGLEKPIVKAGFVATRISVTNLNLEIVRALAREGIPTIGMSPFSCGWSTSKRDVASADLATVAKTIDSGFVPVLHGDAVLDNILGCTILSGDVIIRHLADHLKPEYVVFLTDVLGVYDRPPSPSEPDAVLLKEIAVGEDGSWKVVNPLLEHTDKKVDYSVAAHDTTGGMETKISEAAMIAKLGVDVYIVKAATTHSQRALNGDLRDSVPEDWLGTIIRFSK.

Methionine 1 carries the post-translational modification N-acetylmethionine. 18 to 22 is a binding site for ATP; the sequence is KLGGA. Alanine 96 contacts substrate. Glycine 97 provides a ligand contact to ATP. Substrate-binding residues include histidine 101 and glycine 202. ATP-binding positions include aspartate 223, 228–233, glycine 279, and lysine 283; that span reads YDRPPS.

Belongs to the isopentenyl phosphate kinase family.

The protein localises to the cytoplasm. Its subcellular location is the cytosol. It catalyses the reaction isopentenyl phosphate + ATP = isopentenyl diphosphate + ADP. Catalyzes the formation of isopentenyl diphosphate (IPP), the universal five-carbon isoprenoid building block of all natural isoprenoids. Acts in parallel with the mevalonate (MVA) pathway and plays an important role in regulating the formation of both MVA and methylerythritol phosphate (MEP) pathway-derived terpenoid compounds by controlling the ratio of isopentenyl phosphate (IP) and dimethylallyl phosphate (DMAP) to isopentenyl diphosphate (IPP) and dimethylallyl diphosphate (DMAPP). Controls the levels of IP and DMAP that are competitive inhibitors of the farnesyl diphosphate synthase. Regulates the production of farnesyl diphosphate-derived terpenoids in the cytosol, and geranyl diphosphate-derived compounds in plastids. This chain is Isopentenyl phosphate kinase, found in Arabidopsis thaliana (Mouse-ear cress).